We begin with the raw amino-acid sequence, 223 residues long: Ras-related protein Rab-32 (223 aa).

Ala-2 is modified (N-acetylalanine). Residues Val-34, Gly-35, Lys-36, Thr-37, Ser-38, Ser-49, Gln-50, Tyr-52, and Thr-55 each coordinate GTP. Residue Thr-37 coordinates Mg(2+). The short motif at 46 to 60 (QLFSQHYRATIGVDF) is the Switch 1 element. A Mg(2+)-binding site is contributed by Thr-55. Ser-69 is subject to Phosphoserine. Asp-79 lines the Mg(2+) pocket. The GTP site is built by Gly-82, Asn-141, Lys-142, Asp-144, Ala-173, and Lys-174. Residues 82–95 (GQERFGNMTRVYYK) carry the Switch 2 motif. The interval 176–195 (NINIDEATRFLVENMLANQQ) is PKA-RII subunit binding domain. S-geranylgeranyl cysteine attachment occurs at residues Cys-222 and Cys-223.

It belongs to the small GTPase superfamily. Rab family. In terms of assembly, interacts with ANKRD27. A decreased interaction with ANKRD27 seen in the presence of SGSM2. Interacts with LRRK2 (via N-terminus); this interaction results in stimulation of RAB10 phosphorylation by LRRK2. It depends on Mg(2+) as a cofactor. In terms of tissue distribution, widely expressed with highest levels in liver. Strong expression also found in melanocyte, platelet, mast cell and fibroblast cell lines.

The protein localises to the mitochondrion. Its subcellular location is the mitochondrion outer membrane. The protein resides in the cytoplasmic vesicle. It is found in the phagosome. It localises to the phagosome membrane. The protein localises to the melanosome. Its subcellular location is the melanosome membrane. It catalyses the reaction GTP + H2O = GDP + phosphate + H(+). With respect to regulation, regulated by guanine the nucleotide exchange factor (GEF) BLOC-3 complex composed of HPS1 and HPS4 which promote the exchange of bound GDP for free GTP. Regulated by the GTPase activating protein (GAP) SGSM2/RUTBC1 which increases the GTP hydrolysis activity. Inhibited by GDP dissociation inhibitors (GDIs) which prevent Rab-GDP dissociation. The small GTPases Rab are key regulators of intracellular membrane trafficking, from the formation of transport vesicles to their fusion with membranes. Rabs cycle between an inactive GDP-bound form and an active GTP-bound form that is able to recruit to membranes different set of downstream effectors directly responsible for vesicle formation, movement, tethering and fusion. Also acts as an A-kinase anchoring protein by binding to the type II regulatory subunit of protein kinase A and anchoring it to the mitochondrion. Also involved in synchronization of mitochondrial fission. Plays a role in the maturation of phagosomes that engulf pathogens, such as S.aureus and M.tuberculosis. Plays an important role in the control of melanin production and melanosome biogenesis. In concert with RAB38, regulates the proper trafficking of melanogenic enzymes TYR, TYRP1 and DCT/TYRP2 to melanosomes in melanocytes. Stimulates phosphorylation of RAB10 'Thr-73' by LRRK2. In Mus musculus (Mouse), this protein is Ras-related protein Rab-32.